The sequence spans 330 residues: D-lactate dehydrogenase (330 aa).

Residues 155 to 156 (RI), Asp175, 206 to 207 (MP), Asn212, 233 to 235 (MAR), and Asp259 each bind NAD(+). Residue Arg235 is part of the active site. Glu264 is an active-site residue. The active-site Proton donor is the His296.

It belongs to the D-isomer specific 2-hydroxyacid dehydrogenase family.

It carries out the reaction (R)-lactate + NAD(+) = pyruvate + NADH + H(+). This Streptococcus pyogenes serotype M1 protein is D-lactate dehydrogenase (ldhD).